Consider the following 127-residue polypeptide: Fluoride-specific ion channel FluC (127 aa).

The next 4 helical transmembrane spans lie at Leu4–Met24, Leu35–Phe55, Thr71–Leu91, and Val103–Ala123. The Na(+) site is built by Gly75 and Thr78.

Belongs to the fluoride channel Fluc/FEX (TC 1.A.43) family.

The protein resides in the cell inner membrane. It catalyses the reaction fluoride(in) = fluoride(out). Na(+) is not transported, but it plays an essential structural role and its presence is essential for fluoride channel function. Its function is as follows. Fluoride-specific ion channel. Important for reducing fluoride concentration in the cell, thus reducing its toxicity. This is Fluoride-specific ion channel FluC from Escherichia coli (strain K12 / MC4100 / BW2952).